Consider the following 129-residue polypeptide: Small ribosomal subunit protein uS11c (129 aa).

Belongs to the universal ribosomal protein uS11 family. In terms of assembly, part of the 30S ribosomal subunit.

The protein resides in the plastid. It localises to the chloroplast. The polypeptide is Small ribosomal subunit protein uS11c (Gracilaria tenuistipitata var. liui (Red alga)).